The sequence spans 467 residues: GTPase Obg (467 aa).

An Obg domain is found at 1–158 (MFYDEAKIFV…RWLRLELKLL (158 aa)). Residues 159–333 (ADVGLVGLPN…LIRATWERLQ (175 aa)) enclose the OBG-type G domain. GTP contacts are provided by residues 165-172 (GLPNAGKS), 190-194 (FTTLE), 214-217 (DLPG), 285-288 (NKMD), and 314-316 (SAA). Residues Ser172 and Thr192 each coordinate Mg(2+). An OCT domain is found at 352-430 (TLDRSQERWE…VAGRELVWEP (79 aa)).

The protein belongs to the TRAFAC class OBG-HflX-like GTPase superfamily. OBG GTPase family. In terms of assembly, monomer. The cofactor is Mg(2+).

Its subcellular location is the cytoplasm. An essential GTPase which binds GTP, GDP and possibly (p)ppGpp with moderate affinity, with high nucleotide exchange rates and a fairly low GTP hydrolysis rate. Plays a role in control of the cell cycle, stress response, ribosome biogenesis and in those bacteria that undergo differentiation, in morphogenesis control. This is GTPase Obg from Thermomicrobium roseum (strain ATCC 27502 / DSM 5159 / P-2).